Reading from the N-terminus, the 463-residue chain is Sodium-coupled neutral amino acid transporter 7 (463 aa).

Position 28 is a phosphoserine (Ser-28). A run of 11 helical transmembrane segments spans residues 56 to 76 (AVFI…PAAF), 82 to 102 (VAAG…GLVI), 130 to 150 (LCEV…LIII), 179 to 199 (FTIS…KEIG), 206 to 226 (FLSV…YIWP), 240 to 260 (ASWM…QCHV), 283 to 303 (AAMV…FLTF), 320 to 340 (VAVA…YPIL), 372 to 392 (VLQT…IPDI), 396 to 416 (ISVI…LCLI), and 429 to 449 (ASWW…AFIF).

This sequence belongs to the amino acid/polyamine transporter 2 family. In terms of assembly, interacts with the mTORC1 complex; this interaction mediates the recruitment of mTORC1 to the lysosome and its subsequent activation. In terms of tissue distribution, highly expressed in the brain, including the hippocampus, especially in the granular layer of dentate gyrus cells and the pyramidal cell layer of the hippocampus, amygdala, thalamus, hypothalamus, in the layer of Purkinje cells in the cerebellum and the layers of cortex. Particularly strong expression in neurons of the ventromedial hypothalamus, basolateral amygdala, ventral tegmental area, and locus coeruleus. Not detected in glial cells, including astrocytes. In addition to brain, also expressed in the spinal cord (at protein level).

Its subcellular location is the lysosome membrane. The protein resides in the cell projection. It localises to the axon. The catalysed reaction is L-glutamine(in) + Na(+)(in) = L-glutamine(out) + Na(+)(out). It catalyses the reaction L-asparagine(in) + Na(+)(in) = L-asparagine(out) + Na(+)(out). Functionally, symporter that selectively cotransports sodium ions and amino acids, such as L-glutamine and L-asparagine from the lysosome into the cytoplasm and may participates in mTORC1 activation. The transport activity requires an acidic lysosomal lumen. The sequence is that of Sodium-coupled neutral amino acid transporter 7 from Mus musculus (Mouse).